The primary structure comprises 500 residues: MAPPPVNSGDAAAAATGEKSKLSPSGLPIREIPGGYGVPFFSPLRDRLDYFYFQGAEEYFRSRVARHGGATVLRVNMPPGPFISGNPRVVALLDARSFRVLLDDSMVDKADTLDGTYMPSRALFGGHRPLAFLDAADPRHAKIKRVVMSLAAARMHHVAPAFRAAFAAMFDAVEAGLGAAVEFNKLNMRYMLDFTCAALFGGEPPSKVVGDGAVTKAMAWLAFQLHPIASKVVKPWPLEELLLHTFSLPPFLVRRGYADLKAYFADAAAAVLDDAEKSHTGIPRDELLDNLVFVAIFNAFGGFKIFLPHIVKWLARAGPELHAKLATEVRATVPTGEDDGITLAAVERMPLVKSVVWEALRMNPPVEFQYGHARRDMVVESHDAAYEVRKGEMLFGYQPLATRDEKVFDRAGEFVADRFVAGGAAGDRPLLEHVVWSNGPETRAPSEGNKQCPGKDMVVAVGRLMVAELFRRYDTFAADVVEAPVEPVVTFTSLTRASSG.

Positions 1–26 (MAPPPVNSGDAAAAATGEKSKLSPSG) are disordered. Substrate contacts are provided by residues 297-298 (FN), Lys-304, and 365-368 (PVEF). Cys-452 is a binding site for heme.

This sequence belongs to the cytochrome P450 family. Heme is required as a cofactor. Not expressed in dark-grown seedlings.

The enzyme catalyses (13S)-hydroperoxy-(9Z,11E,15Z)-octadecatrienoate = (9Z,13S,15Z)-12,13-epoxyoctadeca-9,11,15-trienoate + H2O. It participates in lipid metabolism; oxylipin biosynthesis. Involved in the biosynthesis of jasmonic acid, a growth regulator that is implicated also as a signaling molecule in plant defense. Converts 13-hydroperoxylinolenic acid to 12,13-epoxylinolenic acid. The sequence is that of Allene oxide synthase 3 (CYP74A3) from Oryza sativa subsp. japonica (Rice).